The primary structure comprises 323 residues: Acetyl-coenzyme A carboxylase carboxyl transferase subunit alpha (323 aa).

The CoA carboxyltransferase C-terminal domain maps to 39-293 (RLSKKSQQLT…RRALADSLRQ (255 aa)).

Belongs to the AccA family. In terms of assembly, acetyl-CoA carboxylase is a heterohexamer composed of biotin carboxyl carrier protein (AccB), biotin carboxylase (AccC) and two subunits each of ACCase subunit alpha (AccA) and ACCase subunit beta (AccD).

It is found in the cytoplasm. The enzyme catalyses N(6)-carboxybiotinyl-L-lysyl-[protein] + acetyl-CoA = N(6)-biotinyl-L-lysyl-[protein] + malonyl-CoA. Its pathway is lipid metabolism; malonyl-CoA biosynthesis; malonyl-CoA from acetyl-CoA: step 1/1. Its function is as follows. Component of the acetyl coenzyme A carboxylase (ACC) complex. First, biotin carboxylase catalyzes the carboxylation of biotin on its carrier protein (BCCP) and then the CO(2) group is transferred by the carboxyltransferase to acetyl-CoA to form malonyl-CoA. The protein is Acetyl-coenzyme A carboxylase carboxyl transferase subunit alpha of Burkholderia vietnamiensis (strain G4 / LMG 22486) (Burkholderia cepacia (strain R1808)).